Reading from the N-terminus, the 359-residue chain is Pyruvate dehydrogenase E1 component subunit beta, mitochondrial (359 aa).

A mitochondrion-targeting transit peptide spans 1-30 (MAAVSGLVRRPLREVSRLLKRRFHWTAPAA). Tyr67 bears the Phosphotyrosine mark. Residue Glu89 coordinates thiamine diphosphate. K(+)-binding residues include Ile142, Ala190, Ile191, Asp193, and Asn195. Residue Lys354 is modified to N6-acetyllysine.

Heterotetramer of two PDHA1 and two PDHB subunits. The heterotetramer interacts with DLAT, and is part of the multimeric pyruvate dehydrogenase complex that contains multiple copies of pyruvate dehydrogenase (E1), dihydrolipoamide acetyltransferase (DLAT, E2) and lipoamide dehydrogenase (DLD, E3). These subunits are bound to an inner core composed of about 48 DLAT and 12 PDHX molecules. Interacts with DLAT. It depends on thiamine diphosphate as a cofactor.

Its subcellular location is the mitochondrion matrix. It carries out the reaction N(6)-[(R)-lipoyl]-L-lysyl-[protein] + pyruvate + H(+) = N(6)-[(R)-S(8)-acetyldihydrolipoyl]-L-lysyl-[protein] + CO2. The pyruvate dehydrogenase complex catalyzes the overall conversion of pyruvate to acetyl-CoA and CO(2), and thereby links the glycolytic pathway to the tricarboxylic cycle. This Pongo abelii (Sumatran orangutan) protein is Pyruvate dehydrogenase E1 component subunit beta, mitochondrial (PDHB).